The chain runs to 372 residues: GDP-mannose 4,6-dehydratase (372 aa).

NADP(+) contacts are provided by residues 8–13 (GITGQD), 63–64 (DL), 85–89 (LGAQS), and Tyr-100. Residue Thr-132 is part of the active site. Residues Glu-134 and Tyr-156 each act as nucleophile in the active site. NADP(+)-binding residues include Lys-160, His-186, and Arg-191.

This sequence belongs to the NAD(P)-dependent epimerase/dehydratase family. GDP-mannose 4,6-dehydratase subfamily. NADP(+) serves as cofactor.

The catalysed reaction is GDP-alpha-D-mannose = GDP-4-dehydro-alpha-D-rhamnose + H2O. Its pathway is bacterial outer membrane biogenesis; LPS O-antigen biosynthesis. The protein operates within nucleotide-sugar biosynthesis; GDP-L-fucose biosynthesis via de novo pathway; GDP-L-fucose from GDP-alpha-D-mannose: step 1/2. In terms of biological role, catalyzes the conversion of GDP-D-mannose to GDP-4-dehydro-6-deoxy-D-mannose. The chain is GDP-mannose 4,6-dehydratase from Yersinia enterocolitica serotype O:8 / biotype 1B (strain NCTC 13174 / 8081).